The sequence spans 158 residues: Inorganic pyrophosphatase (158 aa).

Residue Glu8 coordinates Mg(2+). Substrate contacts are provided by Lys16, Arg30, and Tyr42. The Mg(2+) site is built by Asp52, Asp57, Asp84, and Asp89. The Proton acceptor role is filled by Asp89. Tyr125 is a binding site for substrate.

It belongs to the PPase family. Homohexamer. The cofactor is Mg(2+).

The protein resides in the cytoplasm. It catalyses the reaction diphosphate + H2O = 2 phosphate + H(+). Functionally, catalyzes the hydrolysis of inorganic pyrophosphate (PPi) forming two phosphate ions. The sequence is that of Inorganic pyrophosphatase from Corynebacterium efficiens (strain DSM 44549 / YS-314 / AJ 12310 / JCM 11189 / NBRC 100395).